A 352-amino-acid polypeptide reads, in one-letter code: Protein SIS1 (352 aa).

Residues 4 to 70 (ETKLYDLLGV…REIYDQYGLE (67 aa)) form the J domain. Phosphoserine is present on Ser275. The tract at residues 300 to 325 (VQPVQPSQTSTYPGQGMPTPKNPSQR) is disordered. Residues 301-312 (QPVQPSQTSTYP) are compositionally biased toward polar residues.

Interacts with polyadenylate-binding protein PAB1.

It is found in the cytoplasm. It localises to the nucleus. Its function is as follows. Required for nuclear migration during mitosis. It is required for the normal initiation of translation. Might mediate the dissociation of a specific protein complex of the translation machinery. Essential for viability. The protein is Protein SIS1 (SIS1) of Saccharomyces cerevisiae (strain ATCC 204508 / S288c) (Baker's yeast).